Reading from the N-terminus, the 110-residue chain is MGVSMSLWKKLDEKENQRTHNLSNSDANDRILRVINSAFGVPDDIKEEVIAAIDKAIKHGLENGTLNYLKVIELACEGYTKEDIAEAYGHQILGAYVAVLILTGKPLKLK.

This is an uncharacterized protein from Methanocaldococcus jannaschii (strain ATCC 43067 / DSM 2661 / JAL-1 / JCM 10045 / NBRC 100440) (Methanococcus jannaschii).